A 232-amino-acid chain; its full sequence is Orotidine 5'-phosphate decarboxylase (232 aa).

Substrate-binding positions include aspartate 13, lysine 35, 62–71 (DLKFHDIPNT), threonine 122, arginine 182, glutamine 191, glycine 211, and arginine 212. Lysine 64 acts as the Proton donor in catalysis.

This sequence belongs to the OMP decarboxylase family. Type 1 subfamily. In terms of assembly, homodimer.

It carries out the reaction orotidine 5'-phosphate + H(+) = UMP + CO2. The protein operates within pyrimidine metabolism; UMP biosynthesis via de novo pathway; UMP from orotate: step 2/2. Its function is as follows. Catalyzes the decarboxylation of orotidine 5'-monophosphate (OMP) to uridine 5'-monophosphate (UMP). This Pseudomonas paraeruginosa (strain DSM 24068 / PA7) (Pseudomonas aeruginosa (strain PA7)) protein is Orotidine 5'-phosphate decarboxylase.